We begin with the raw amino-acid sequence, 85 residues long: MGLIDFLRNKTKTAETAKNRLQIIIAQERTQRGGPDYLPLLQRELLEVIKKYVKIDADAVKVDLIKDGANDVLDISVALPDDSER.

Belongs to the MinE family.

In terms of biological role, prevents the cell division inhibition by proteins MinC and MinD at internal division sites while permitting inhibition at polar sites. This ensures cell division at the proper site by restricting the formation of a division septum at the midpoint of the long axis of the cell. This is Cell division topological specificity factor from Xylella fastidiosa (strain M23).